Here is a 245-residue protein sequence, read N- to C-terminus: Eukaryotic translation initiation factor 3 subunit K (245 aa).

Positions 46–227 (YDCYANLALL…EAKGTVVREN (182 aa)) constitute a PCI domain.

This sequence belongs to the eIF-3 subunit K family. In terms of assembly, component of the eukaryotic translation initiation factor 3 (eIF-3) complex.

The protein resides in the cytoplasm. In terms of biological role, component of the eukaryotic translation initiation factor 3 (eIF-3) complex, which is involved in protein synthesis of a specialized repertoire of mRNAs and, together with other initiation factors, stimulates binding of mRNA and methionyl-tRNAi to the 40S ribosome. The eIF-3 complex specifically targets and initiates translation of a subset of mRNAs involved in cell proliferation. The polypeptide is Eukaryotic translation initiation factor 3 subunit K (Phaeosphaeria nodorum (strain SN15 / ATCC MYA-4574 / FGSC 10173) (Glume blotch fungus)).